A 143-amino-acid polypeptide reads, in one-letter code: Nucleoside diphosphate kinase (143 aa).

Positions 10, 58, 86, 92, 103, and 113 each coordinate ATP. Residue His-116 is the Pros-phosphohistidine intermediate of the active site.

This sequence belongs to the NDK family. In terms of assembly, homotetramer. Mg(2+) is required as a cofactor.

The protein resides in the cytoplasm. The catalysed reaction is a 2'-deoxyribonucleoside 5'-diphosphate + ATP = a 2'-deoxyribonucleoside 5'-triphosphate + ADP. The enzyme catalyses a ribonucleoside 5'-diphosphate + ATP = a ribonucleoside 5'-triphosphate + ADP. Functionally, major role in the synthesis of nucleoside triphosphates other than ATP. The ATP gamma phosphate is transferred to the NDP beta phosphate via a ping-pong mechanism, using a phosphorylated active-site intermediate. This is Nucleoside diphosphate kinase from Ehrlichia ruminantium (strain Welgevonden).